Reading from the N-terminus, the 490-residue chain is ATP synthase subunit beta, chloroplastic (490 aa).

170 to 177 provides a ligand contact to ATP; that stretch reads GGAGVGKT.

This sequence belongs to the ATPase alpha/beta chains family. As to quaternary structure, F-type ATPases have 2 components, CF(1) - the catalytic core - and CF(0) - the membrane proton channel. CF(1) has five subunits: alpha(3), beta(3), gamma(1), delta(1), epsilon(1). CF(0) has four main subunits: a(1), b(1), b'(1) and c(9-12).

It is found in the plastid. The protein resides in the chloroplast thylakoid membrane. It catalyses the reaction ATP + H2O + 4 H(+)(in) = ADP + phosphate + 5 H(+)(out). Functionally, produces ATP from ADP in the presence of a proton gradient across the membrane. The catalytic sites are hosted primarily by the beta subunits. In Calystegia sepium (Hedge bindweed), this protein is ATP synthase subunit beta, chloroplastic.